The primary structure comprises 231 residues: 7-cyano-7-deazaguanine synthase (231 aa).

11–21 (LSAGLDSTVNA) serves as a coordination point for ATP. Zn(2+) contacts are provided by C197, C205, C208, and C211.

It belongs to the QueC family. Zn(2+) is required as a cofactor.

It catalyses the reaction 7-carboxy-7-deazaguanine + NH4(+) + ATP = 7-cyano-7-deazaguanine + ADP + phosphate + H2O + H(+). It functions in the pathway purine metabolism; 7-cyano-7-deazaguanine biosynthesis. Catalyzes the ATP-dependent conversion of 7-carboxy-7-deazaguanine (CDG) to 7-cyano-7-deazaguanine (preQ(0)). This is 7-cyano-7-deazaguanine synthase from Bdellovibrio bacteriovorus (strain ATCC 15356 / DSM 50701 / NCIMB 9529 / HD100).